Consider the following 206-residue polypeptide: Macrophage immunometabolism regulator (206 aa).

The protein belongs to the UNC119-binding protein family. As to quaternary structure, interacts with unc119 family proteins; interaction preferentially takes place when unc119 proteins are unliganded with myristoylated proteins.

It is found in the cytoplasm. The protein localises to the cell projection. Its subcellular location is the cilium. Functionally, may play a role in immune regulation through regulation of the macrophage function. Involved in the recruitment of macrophages in response to injury. May also play a role in trafficking of proteins via its interaction with unc119 family cargo adapters. May play a role in ciliary membrane localization. Regulates the macrophage function, by enhancing the resolution of inflammation and wound repair functions mediated by M2 macrophages. The regulation of macrophage function is, due at least in part, to the role of C5orf30 in regulating ability to inhibit glycolysis. Probably plays alaso a role in trafficking of proteins via its interaction with UNC119 and UNC119B cargo adapters: may help the release of UNC119 and UNC119B cargo or the recycling of UNC119 and UNC119B. May play a role in ciliary membrane localization via its interaction with UNC119B and protein transport into photoreceptor cells. The protein is Macrophage immunometabolism regulator (macir) of Danio rerio (Zebrafish).